The chain runs to 104 residues: Complex III assembly factor LYRM7 (104 aa).

This sequence belongs to the complex I LYR family. As to quaternary structure, interacts with UQCRFS1.

It is found in the mitochondrion matrix. In terms of biological role, assembly factor required for Rieske Fe-S protein UQCRFS1 incorporation into the cytochrome b-c1 (CIII) complex. Functions as a chaperone, binding to this subunit within the mitochondrial matrix and stabilizing it prior to its translocation and insertion into the late CIII dimeric intermediate within the mitochondrial inner membrane. This is Complex III assembly factor LYRM7 (LYRM7) from Danio rerio (Zebrafish).